A 199-amino-acid polypeptide reads, in one-letter code: Thymidine kinase (199 aa).

ATP is bound by residues 15–22 (GSMFSGKS) and 88–91 (DEIQ). Glu89 functions as the Proton acceptor in the catalytic mechanism. Positions 145, 148, 183, and 186 each coordinate Zn(2+).

Belongs to the thymidine kinase family. As to quaternary structure, homotetramer.

Its subcellular location is the cytoplasm. The catalysed reaction is thymidine + ATP = dTMP + ADP + H(+). This Staphylococcus haemolyticus (strain JCSC1435) protein is Thymidine kinase.